The chain runs to 274 residues: Single-stranded DNA-binding protein WHY1, chloroplastic (274 aa).

The N-terminal 54 residues, 1 to 54 (MSNFSLSPSPTSGFSLNLQNPTKTSYLSFSSSINTIFAPLSSNTTKSFSGLTHK), are a transit peptide targeting the chloroplast. Positions 100–105 (KGKAAL) are required for ssDNA binding. The short motif at 178 to 191 (KGRSDEGRVRKVLK) is the Nuclear localization signal element. Residues 253 to 274 (PEDASRSNNANPRSGAELEWNR) are disordered.

The protein belongs to the Whirly family. Homotetramer.

The protein localises to the nucleus. The protein resides in the plastid. It localises to the chloroplast. Functionally, single-stranded DNA-binding protein that acts as a transcriptional activator of the pathogenesis-related gene PR-10a. Upon elicitation, binds a 30bp promoter sequence known as elicitor element response (ERE) and is required for PR-10a expression. The protein is Single-stranded DNA-binding protein WHY1, chloroplastic (WHY1) of Solanum tuberosum (Potato).